A 657-amino-acid chain; its full sequence is Forkhead box protein O3 (657 aa).

Disordered regions lie at residues 1-71 (MAEA…EGAA) and 216-320 (SSWW…ELDD). The segment at residues 142 to 236 (WGNMSYADLI…KGGKAPRRRA (95 aa)) is a DNA-binding region (fork-head). Basic residues predominate over residues 246 to 257 (TKSRGRAAKKKA). Residues 268-283 (DSPSQLSKWPGSPTSR) are compositionally biased toward polar residues. Residues 284–296 (SSDKLDTWTDFRS) show a composition bias toward basic and acidic residues. Positions 297–307 (RTNSNASTISG) are enriched in polar residues.

Post-translationally, dephosphorylation may promote translocation to the nucleus where the protein induces transcription of target genes and triggers apoptosis. In terms of tissue distribution, localized to the animal hemisphere during early cleavage stages. At the late neurula, localized in the anterior neural plate, neural crest cells and in the hatching gland. As development progresses, expression becomes less localized, being observed in a variety of organs and tissues including the head, branchial arches and somites by stage 32.

It localises to the cytoplasm. The protein localises to the cytosol. It is found in the nucleus. Transcriptional activator that recognizes and binds to the DNA sequence 5'-[AG]TAAA[TC]A-3' and regulates different processes, such as apoptosis and autophagy. Acts as a positive regulator of autophagy in skeletal muscle: in starved cells, enters the nucleus following dephosphorylation and binds the promoters of autophagy genes, thereby activating their expression, resulting in proteolysis of skeletal muscle proteins. Triggers apoptosis in the absence of survival factors, including neuronal cell death upon oxidative stress. In response to metabolic stress, translocates into the mitochondria where it promotes mtDNA transcription. Also acts as a key regulator of chondrogenic commitment of skeletal progenitor cells in response to lipid availability: when lipids levels are low, translocates to the nucleus and promotes expression of sox9, which induces chondrogenic commitment and suppresses fatty acid oxidation. Also acts as a key regulator of regulatory T-cells (Treg) differentiation. This Xenopus laevis (African clawed frog) protein is Forkhead box protein O3.